The following is a 450-amino-acid chain: Sensor histidine kinase EnvZ (450 aa).

Residues 1–15 (MRRLRFSPRSSFART) are Cytoplasmic-facing. A helical membrane pass occupies residues 16-35 (LLLIVTLLFASLVTTYLVVL). Residues 36 to 158 (NFAILPSLQQ…LTEIHQGDFS (123 aa)) are Periplasmic-facing. The short motif at 71–75 (VVPPA) is the polyP-periplasmic motif element. Residues 159 to 179 (PLFRYTLAIMLLAIGGAWLFI) traverse the membrane as a helical segment. The HAMP domain maps to 180-232 (RIQNRPLVDLEHAALQVGKGIIPPPLREYGASEVRSVTRAFNHMAAGVKQLAD). At 180 to 450 (RIQNRPLVDL…TRAQGTTKEG (271 aa)) the chain is on the cytoplasmic side. Positions 201-205 (IPPPL) match the polyP-cytoplasmic motif motif. Positions 223–289 (MAAGVKQLAD…IIEQFIDYLR (67 aa)) are cytoplasmic dimerization domain (CDD), when dimerized forms osmosensitive core. The Histidine kinase domain maps to 240–440 (GVSHDLRTPL…SIRAWLPVPV (201 aa)). ATP is bound by residues His-243, 347-351 (NAARY), Asp-373, 392-393 (RG), and 402-406 (TGLGL). Phosphohistidine; by autocatalysis is present on His-243.

As to quaternary structure, homodimer. Interacts with MzrA. Autophosphorylated. Incubation of isolated EnvZ C-terminal fragment (residues 180-450) with increasing levels of NaCl or sucrose increases its autophosphorylation.

It localises to the cell inner membrane. It catalyses the reaction ATP + protein L-histidine = ADP + protein N-phospho-L-histidine.. Activity is modulated by MzrA. In the presence of 0.2 M NaCl, 2.0 mM sodium cholate (bile salts) decreases expression from the ompC promoter; how this is mediated is unknown. Autophosphorylation is inhibited by the angucycline antibiotic waldiomycin in a non-competitive manner; waldiomycin prevents dimerization of the cytoplasmic domain and autophosphorylation. Its function is as follows. Member of the two-component regulatory system EnvZ/OmpR involved in osmoregulation (particularly of genes ompF and ompC) as well as other genes. EnvZ functions as a membrane-associated protein kinase that phosphorylates OmpR in response to environmental signals; at low osmolarity OmpR activates ompF transcription, while at high osmolarity it represses ompF and activates ompC transcription. Also dephosphorylates OmpR in the presence of ATP. The cytoplasmic dimerization domain (CDD) forms an osmosensitive core; increasing osmolarity stabilizes this segment (possibly by its contraction), enhancing the autophosphorylation rate and consequently, downstream phosphotransfer to OmpR and signaling. Autophosphorylation is greater when full-length EnvZ is reconstituted in a lipid environment, lipid-mediated allostery impacts the kinase function of EnvZ. Involved in acid stress response; this requires EnvZ but not OmpR phosphorylation, and suggests that EnvZ senses cytoplasmic acidic pH. The chain is Sensor histidine kinase EnvZ (envZ) from Escherichia coli (strain K12).